The primary structure comprises 502 residues: Glutamate decarboxylase (502 aa).

The residue at position 278 (K278) is an N6-(pyridoxal phosphate)lysine. Positions 471–502 are calmodulin-binding; sequence GLHHFHMDTVETQKDIIKHWRKIAGKKTSGVC.

This sequence belongs to the group II decarboxylase family. The cofactor is pyridoxal 5'-phosphate.

It carries out the reaction L-glutamate + H(+) = 4-aminobutanoate + CO2. Catalyzes the production of GABA. The calmodulin-binding is calcium-dependent and it is proposed that this may, directly or indirectly, form a calcium regulated control of GABA biosynthesis. The chain is Glutamate decarboxylase from Solanum lycopersicum (Tomato).